A 170-amino-acid polypeptide reads, in one-letter code: Acetyl-CoA decarbonylase/synthase complex subunit epsilon 1 (170 aa).

Belongs to the CdhB family. Heterotetramer of two alpha and two epsilon subunits. The ACDS complex is made up of alpha, epsilon, beta, gamma and delta subunits with a probable stoichiometry of (alpha(2)epsilon(2))(4)-beta(8)-(gamma(1)delta(1))(8).

Its pathway is one-carbon metabolism; methanogenesis from acetate. Its function is as follows. Part of a complex that catalyzes the reversible cleavage of acetyl-CoA, allowing growth on acetate as sole source of carbon and energy. The alpha-epsilon subcomponent functions as a carbon monoxide dehydrogenase. The precise role of the epsilon subunit is unclear; it may have a stabilizing role within the alpha(2)epsilon(2) component and/or be involved in electron transfer to FAD during a potential FAD-mediated CO oxidation. The protein is Acetyl-CoA decarbonylase/synthase complex subunit epsilon 1 (cdhB1) of Methanosarcina thermophila.